The chain runs to 98 residues: Leydig cell tumor 10 kDa protein homolog (98 aa).

2 disordered regions span residues 1 to 38 (MAQG…RVIA) and 73 to 98 (SLPK…KMPA). Positions 16–25 (SKAAAAAASA) are enriched in low complexity. Basic residues predominate over residues 28–38 (RGPRKGGRVIA). Low complexity predominate over residues 73 to 83 (SLPKKLALLKA).

The protein belongs to the UPF0390 family.

Functionally, may have a potential role in hypercalcemia of malignancy. This is Leydig cell tumor 10 kDa protein homolog from Bos taurus (Bovine).